The following is a 67-amino-acid chain: Protein AaeX (67 aa).

Transmembrane regions (helical) follow at residues 3–23 (LFPV…ELLL) and 43–63 (FVWH…YLLS).

This sequence belongs to the AaeX family.

The protein localises to the cell membrane. The protein is Protein AaeX of Cronobacter sakazakii (strain ATCC BAA-894) (Enterobacter sakazakii).